Reading from the N-terminus, the 315-residue chain is Protein phosphatase PTC7 homolog fig (315 aa).

Residues 54–309 form the PPM-type phosphatase domain; it reads KHSIASAKDN…DDITVILATV (256 aa). Mn(2+) contacts are provided by Asp86, Gly87, and Asp231.

Belongs to the PP2C family. The cofactor is Mg(2+). Mn(2+) is required as a cofactor.

It carries out the reaction O-phospho-L-seryl-[protein] + H2O = L-seryl-[protein] + phosphate. The enzyme catalyses O-phospho-L-threonyl-[protein] + H2O = L-threonyl-[protein] + phosphate. The sequence is that of Protein phosphatase PTC7 homolog fig from Drosophila willistoni (Fruit fly).